The primary structure comprises 91 residues: Non-specific lipid-transfer protein P5 (91 aa).

4 disulfides stabilise this stretch: cysteine 3/cysteine 50, cysteine 13/cysteine 27, cysteine 28/cysteine 73, and cysteine 48/cysteine 87.

It localises to the secreted. Its function is as follows. Plant non-specific lipid-transfer proteins transfer phospholipids as well as galactolipids across membranes. May play a role in wax or cutin deposition in the cell walls of expanding epidermal cells and certain secretory tissues. The chain is Non-specific lipid-transfer protein P5 from Vitis sp. (Grape).